The sequence spans 195 residues: NADH-quinone oxidoreductase subunit B (195 aa).

Cys-74, Cys-75, Cys-139, and Cys-169 together coordinate [4Fe-4S] cluster.

The protein belongs to the complex I 20 kDa subunit family. NDH-1 is composed of 14 different subunits. Subunits NuoB, C, D, E, F, and G constitute the peripheral sector of the complex. Requires [4Fe-4S] cluster as cofactor.

The protein localises to the cell inner membrane. It catalyses the reaction a quinone + NADH + 5 H(+)(in) = a quinol + NAD(+) + 4 H(+)(out). Functionally, NDH-1 shuttles electrons from NADH, via FMN and iron-sulfur (Fe-S) centers, to quinones in the respiratory chain. The immediate electron acceptor for the enzyme in this species is believed to be ubiquinone. Couples the redox reaction to proton translocation (for every two electrons transferred, four hydrogen ions are translocated across the cytoplasmic membrane), and thus conserves the redox energy in a proton gradient. The sequence is that of NADH-quinone oxidoreductase subunit B from Methylorubrum extorquens (strain PA1) (Methylobacterium extorquens).